The sequence spans 79 residues: Small ribosomal subunit protein bS18 (79 aa).

It belongs to the bacterial ribosomal protein bS18 family. As to quaternary structure, part of the 30S ribosomal subunit. Forms a tight heterodimer with protein bS6.

In terms of biological role, binds as a heterodimer with protein bS6 to the central domain of the 16S rRNA, where it helps stabilize the platform of the 30S subunit. The chain is Small ribosomal subunit protein bS18 from Pseudarthrobacter chlorophenolicus (strain ATCC 700700 / DSM 12829 / CIP 107037 / JCM 12360 / KCTC 9906 / NCIMB 13794 / A6) (Arthrobacter chlorophenolicus).